The sequence spans 567 residues: Septation ring formation regulator EzrA (567 aa).

Over 1 to 2 the chain is Extracellular; that stretch reads ME. Residues 3–21 traverse the membrane as a helical segment; that stretch reads IAVIVLLLLGGVMIYNHVY. Residues 22-567 are Cytoplasmic-facing; it reads RKKMYSEIDR…IFRDERSKEE (546 aa). Coiled-coil stretches lie at residues 97-188 and 254-465; these read RYAK…LTAS and REIV…LEEK.

Belongs to the EzrA family.

It localises to the cell membrane. Functionally, negative regulator of FtsZ ring formation; modulates the frequency and position of FtsZ ring formation. Inhibits FtsZ ring formation at polar sites. Interacts either with FtsZ or with one of its binding partners to promote depolymerization. The protein is Septation ring formation regulator EzrA of Geobacillus sp. (strain WCH70).